A 298-amino-acid chain; its full sequence is Probable phosphoserine phosphatase (298 aa).

The active-site Nucleophile is the D82. Mg(2+)-binding residues include D82 and D84. Residue D84 is the Proton donor of the active site. Substrate contacts are provided by residues E91, R127, 170 to 171, and K217; that span reads SG. D240 lines the Mg(2+) pocket. N243 is a binding site for substrate.

This sequence belongs to the HAD-like hydrolase superfamily. SerB family. Mg(2+) is required as a cofactor.

The catalysed reaction is O-phospho-L-serine + H2O = L-serine + phosphate. The enzyme catalyses O-phospho-D-serine + H2O = D-serine + phosphate. It functions in the pathway amino-acid biosynthesis; L-serine biosynthesis; L-serine from 3-phospho-D-glycerate: step 3/3. The protein is Probable phosphoserine phosphatase of Schizosaccharomyces pombe (strain 972 / ATCC 24843) (Fission yeast).